We begin with the raw amino-acid sequence, 312 residues long: Ribosomal RNA small subunit methyltransferase H (312 aa).

S-adenosyl-L-methionine contacts are provided by residues Gly38 to His40, Asp58, Phe84, Asp104, and Gln111.

This sequence belongs to the methyltransferase superfamily. RsmH family.

The protein resides in the cytoplasm. The catalysed reaction is cytidine(1402) in 16S rRNA + S-adenosyl-L-methionine = N(4)-methylcytidine(1402) in 16S rRNA + S-adenosyl-L-homocysteine + H(+). Specifically methylates the N4 position of cytidine in position 1402 (C1402) of 16S rRNA. The protein is Ribosomal RNA small subunit methyltransferase H of Alcanivorax borkumensis (strain ATCC 700651 / DSM 11573 / NCIMB 13689 / SK2).